Here is a 1056-residue protein sequence, read N- to C-terminus: PH and SEC7 domain-containing protein 4 (1056 aa).

Positions 25–42 (LEPHPGECPRETCSHEDP) are enriched in basic and acidic residues. Disordered stretches follow at residues 25–71 (LEPH…SGVE), 87–149 (CQEQ…QNRS), 195–239 (LPGD…QWGA), 340–362 (GAPAAPPGHGESEGDRLGPAPSA), 388–533 (VQPW…GDVQ), and 546–581 (LRTPMNSSWLPGSPMPQAQSPEEGQRPPAGDKLANG). Polar residues-rich tracts occupy residues 88–99 (QEQTRATDPPES) and 128–137 (NTASPGSPVN). A phosphoserine mark is found at serine 131, serine 134, and serine 143. The span at 207 to 220 (ENEDSGEDSSEPEG) shows a compositional bias: acidic residues. Serine 413 carries the phosphoserine modification. Basic and acidic residues predominate over residues 414-423 (QDRDEREGGH). A compositionally biased stretch (low complexity) spans 438 to 456 (RSPASSPEPSSPESESRGP). A phosphoserine mark is found at serine 448, serine 469, and serine 491. Polar residues-rich tracts occupy residues 466-476 (QEGSPQLQHHS) and 486-502 (DASQSSLLETDGEQPSS). Over residues 504–522 (KKKEAGEAPKPGEEVKSEG) the composition is skewed to basic and acidic residues. Residues 544–736 (ENLRTPMNSS…KALYWSIRSE (193 aa)) form the SEC7 domain. Over residues 548–567 (TPMNSSWLPGSPMPQAQSPE) the composition is skewed to polar residues. One can recognise a PH domain in the interval 776-892 (PTYKQGILAR…WIARINLAAA (117 aa)). Positions 921-976 (SSLEEQHRSHENCLDAAADDLLDLQRNLPERRGRGRELEEHRLRKEYLEYEKTRYE) form a coiled coil. The tract at residues 1004–1056 (AGGTREPKLSLKKSHSSPSLHQDEAPTTAKVKRNISERRTYRKIIPKRNRNQL) is disordered. Serine 1019 and serine 1022 each carry phosphoserine. Residues 1043 to 1056 (TYRKIIPKRNRNQL) show a composition bias toward basic residues.

Widely expressed. Highest levels of expression are found in placenta, pancreas, spleen, thymus and peripheral blood.

It localises to the cell membrane. Its subcellular location is the cell projection. It is found in the ruffle membrane. In terms of biological role, guanine nucleotide exchange factor for ARF6 and ARL14/ARF7. Through ARL14 activation, controls the movement of MHC class II-containing vesicles along the actin cytoskeleton in dendritic cells. Involved in membrane recycling. Interacts with several phosphatidylinositol phosphate species, including phosphatidylinositol 3,4-bisphosphate, phosphatidylinositol 3,5-bisphosphate and phosphatidylinositol 4,5-bisphosphate. The polypeptide is PH and SEC7 domain-containing protein 4 (PSD4) (Homo sapiens (Human)).